The chain runs to 442 residues: Histidine--tRNA ligase (442 aa).

Residues 416–442 (SGDETTVPVEEFPPEGGEELPTYEDYE) form a disordered region. Residues 427 to 442 (FPPEGGEELPTYEDYE) show a composition bias toward acidic residues.

Belongs to the class-II aminoacyl-tRNA synthetase family.

It localises to the cytoplasm. It carries out the reaction tRNA(His) + L-histidine + ATP = L-histidyl-tRNA(His) + AMP + diphosphate + H(+). This Halorubrum lacusprofundi (strain ATCC 49239 / DSM 5036 / JCM 8891 / ACAM 34) protein is Histidine--tRNA ligase.